The primary structure comprises 106 residues: Immunoglobulin lambda constant 1 (106 aa).

Residues proline 7 to alanine 101 enclose the Ig-like domain. Cysteine 28 and cysteine 87 are oxidised to a cystine.

As to quaternary structure, immunoglobulins are composed of two identical heavy chains and two identical light chains; disulfide-linked.

The protein localises to the secreted. It is found in the cell membrane. Its function is as follows. Constant region of immunoglobulin light chains. Immunoglobulins, also known as antibodies, are membrane-bound or secreted glycoproteins produced by B lymphocytes. In the recognition phase of humoral immunity, the membrane-bound immunoglobulins serve as receptors which, upon binding of a specific antigen, trigger the clonal expansion and differentiation of B lymphocytes into immunoglobulins-secreting plasma cells. Secreted immunoglobulins mediate the effector phase of humoral immunity, which results in the elimination of bound antigens. The antigen binding site is formed by the variable domain of one heavy chain, together with that of its associated light chain. Thus, each immunoglobulin has two antigen binding sites with remarkable affinity for a particular antigen. The variable domains are assembled by a process called V-(D)-J rearrangement and can then be subjected to somatic hypermutations which, after exposure to antigen and selection, allow affinity maturation for a particular antigen. The polypeptide is Immunoglobulin lambda constant 1 (Homo sapiens (Human)).